A 160-amino-acid chain; its full sequence is Cytochrome b6-f complex subunit 4 (160 aa).

Helical transmembrane passes span 36 to 56 (LLYVFPVVILGTIGLVTALAV), 95 to 115 (LLGIACQAAIPLGLMLVPFIE), and 131 to 151 (AVFLFGTVVTLWLGAGATFPI).

Belongs to the cytochrome b family. PetD subfamily. In terms of assembly, the 4 large subunits of the cytochrome b6-f complex are cytochrome b6, subunit IV (17 kDa polypeptide, PetD), cytochrome f and the Rieske protein, while the 4 small subunits are PetG, PetL, PetM and PetN. The complex functions as a dimer.

It is found in the cellular thylakoid membrane. Its function is as follows. Component of the cytochrome b6-f complex, which mediates electron transfer between photosystem II (PSII) and photosystem I (PSI), cyclic electron flow around PSI, and state transitions. This chain is Cytochrome b6-f complex subunit 4, found in Rippkaea orientalis (strain PCC 8801 / RF-1) (Cyanothece sp. (strain PCC 8801)).